Here is a 144-residue protein sequence, read N- to C-terminus: Large ribosomal subunit protein bL31c (144 aa).

The N-terminal 48 residues, 1-48 (MAVSLPNSFLQISPCVPSLQLRKPVMAAVKGGKQSVRRSSNTVVQITC), are a transit peptide targeting the chloroplast.

Belongs to the bacterial ribosomal protein bL31 family. Type A subfamily. Part of the 50S ribosomal subunit.

The protein localises to the plastid. The protein resides in the chloroplast. Functionally, binds the 23S rRNA. This chain is Large ribosomal subunit protein bL31c (RPL31), found in Arabidopsis thaliana (Mouse-ear cress).